The chain runs to 130 residues: C-X-C motif chemokine 5 (130 aa).

The N-terminal stretch at 1–37 is a signal peptide; the sequence is MSFQLRSSARIPSRSCSSFTLLAFLLLFTLPQHRAQA. Cystine bridges form between Cys50/Cys76 and Cys52/Cys93.

It belongs to the intercrine alpha (chemokine CxC) family. As to quaternary structure, monomer. Homodimer.

It localises to the secreted. Its function is as follows. May participate in the recruitment of inflammatory cells by injured or infected tissue. This chain is C-X-C motif chemokine 5 (Cxcl5), found in Rattus norvegicus (Rat).